A 274-amino-acid chain; its full sequence is DNA repair protein Rad1 (274 aa).

Belongs to the rad1 family. As to quaternary structure, component of the 9-1-1 checkpoint clamp complex consisting of Rad9 isoform A, Rad1 and Hus1-like; the interaction with Hus1-like is direct. Does not interact directly with Rad9; this interaction is probably mediated by Hus1-like. This complex probably also forms with Rad9 isoform B, however 9-1-1 complex containing Rad9 isoform A localizes to the nuclear periphery. As to expression, expressed in ovary.

Its subcellular location is the cytoplasm. It localises to the nucleus. The protein resides in the nucleus envelope. The sequence is that of DNA repair protein Rad1 from Drosophila melanogaster (Fruit fly).